The following is a 218-amino-acid chain: MPDLSLERACGGRVAGVDEVGRGPLAGPVVAAAVVIDAGRADPALLARLDDSKKLSAALRQRLATALLADPGVEVGLGEASVAEIDRINILQATFLAMGRALAKLAPPVDLALVDGNRLPPLPCPGQAVVRGDGLSLSIAAASIVAKVHRDAAMATLAQALPGYGWERNAGYGTAEHLAALDRLGATPHHRASFAPVREALARSALPGHKCVTALTFS.

One can recognise an RNase H type-2 domain in the interval 12-206; the sequence is GRVAGVDEVG…VREALARSAL (195 aa). The a divalent metal cation site is built by aspartate 18, glutamate 19, and aspartate 115.

It belongs to the RNase HII family. It depends on Mn(2+) as a cofactor. Mg(2+) is required as a cofactor.

It is found in the cytoplasm. The enzyme catalyses Endonucleolytic cleavage to 5'-phosphomonoester.. Its function is as follows. Endonuclease that specifically degrades the RNA of RNA-DNA hybrids. The protein is Ribonuclease HII of Rhodospirillum rubrum (strain ATCC 11170 / ATH 1.1.1 / DSM 467 / LMG 4362 / NCIMB 8255 / S1).